The chain runs to 220 residues: MRLRKKAWTNEFLNQHTYYLIKYDKKINLNEIFLNNNPTCLEIGCGKGQFLTTLALKNPNLNYIGMEKSSTITAIGLKKSLKEFQNNSKKMTNIKYLNKYAENLLEIFYTDSFSRIYLNFSDPWPKARHYKKRLTYLGFLDIYSDILIKNGFLEFKTDNDSLYNFTLEQLKLTNKWEIISNTLDLYNDQELLKDNVPTEYETKFHLANKNIYKIVIKNLK.

The S-adenosyl-L-methionine site is built by E42, E67, and D122. The active site involves D122. Residues K126, D158, and 198–201 (TEYE) each bind substrate.

This sequence belongs to the class I-like SAM-binding methyltransferase superfamily. TrmB family.

It carries out the reaction guanosine(46) in tRNA + S-adenosyl-L-methionine = N(7)-methylguanosine(46) in tRNA + S-adenosyl-L-homocysteine. The protein operates within tRNA modification; N(7)-methylguanine-tRNA biosynthesis. Its function is as follows. Catalyzes the formation of N(7)-methylguanine at position 46 (m7G46) in tRNA. This chain is tRNA (guanine-N(7)-)-methyltransferase, found in Mycoplasma capricolum subsp. capricolum (strain California kid / ATCC 27343 / NCTC 10154).